Here is a 100-residue protein sequence, read N- to C-terminus: NADH-quinone oxidoreductase subunit K 2 (100 aa).

Transmembrane regions (helical) follow at residues 4–24 (LWWH…GVLL), 28–48 (ILVV…NFIA), and 60–80 (IFAI…LGIL).

The protein belongs to the complex I subunit 4L family. As to quaternary structure, NDH-1 is composed of 14 different subunits. Subunits NuoA, H, J, K, L, M, N constitute the membrane sector of the complex.

Its subcellular location is the cell inner membrane. It catalyses the reaction a quinone + NADH + 5 H(+)(in) = a quinol + NAD(+) + 4 H(+)(out). In terms of biological role, NDH-1 shuttles electrons from NADH, via FMN and iron-sulfur (Fe-S) centers, to quinones in the respiratory chain. The immediate electron acceptor for the enzyme in this species is believed to be ubiquinone. Couples the redox reaction to proton translocation (for every two electrons transferred, four hydrogen ions are translocated across the cytoplasmic membrane), and thus conserves the redox energy in a proton gradient. In Sinorhizobium fredii (strain NBRC 101917 / NGR234), this protein is NADH-quinone oxidoreductase subunit K 2.